We begin with the raw amino-acid sequence, 633 residues long: GTPase-activating protein GYP3 (633 aa).

Residues 26 to 127 are disordered; it reads AFTVKSPSVP…HSDDLDLVPD (102 aa). Positions 37–47 are enriched in basic and acidic residues; sequence FHDKMHSDHSS. Acidic residues predominate over residues 99–115; that stretch reads GEDDDDNNGDNGNEDLE. S147 carries the phosphoserine modification. The region spanning 223–456 is the Rab-GAP TBC domain; it reads GIPAEWRGNA…RIWDCLFYEE (234 aa). Residue S484 is modified to Phosphoserine.

It is found in the cytoplasm. The protein localises to the bud. It localises to the bud neck. Its function is as follows. Regulates exocytosis by functioning as a GAP for SEC4. Stimulates specifically the GTPase activity of YPT6. Also required for efficient polarization of the actin patches. The sequence is that of GTPase-activating protein GYP3 (MSB3) from Saccharomyces cerevisiae (strain ATCC 204508 / S288c) (Baker's yeast).